A 1327-amino-acid polypeptide reads, in one-letter code: Polarized growth protein L1 (1327 aa).

Residues 1 to 30 (MRESFASLLATGAGKLALSLLFAATPFTSA) form the signal peptide. Topologically, residues 31–1169 (YTFNQVPSPN…FSQQNGKHLA (1139 aa)) are extracellular. Asn74, Asn90, Asn105, Asn115, Asn132, Asn170, Asn217, Asn224, Asn235, Asn318, Asn342, Asn452, Asn475, Asn601, Asn639, Asn648, and Asn691 each carry an N-linked (GlcNAc...) asparagine glycan. The Kelch 1 repeat unit spans residues 595-641 (NLYVAGNFSNNDGRNNIFSFKQGASDPTALPNRGLNRQVMTLYQNDS). The Kelch 2 repeat unit spans residues 699 to 754 (QVLAVSGFFDSVNEFNGNPSTNVQDFAVWVPSRSNWLHNLDFFTLAMSGRLMTFAD). N-linked (GlcNAc...) asparagine glycosylation is found at Asn835, Asn852, Asn877, and Asn931. Kelch repeat units lie at residues 945–993 (DVFV…ISDT) and 994–1040 (QMYI…TIAN). Asn1000, Asn1006, and Asn1126 each carry an N-linked (GlcNAc...) asparagine glycan. A helical transmembrane segment spans residues 1170-1190 (LWAIVLIGLAIALVLTFLLVV). Topologically, residues 1191–1327 (AGILLEWYRN…VFDTILACSS (137 aa)) are cytoplasmic.

This sequence belongs to the RAX2 family.

The protein resides in the cell membrane. Its function is as follows. Has been identified within the cluster that mediates the biosynthesis of squalestatin, but as its expression does not follow that of the other cluster members and it is not conserved in close related clusters, L1 seems not to be involved in the biosynthesis of squalestatin. Probably plays a role as a cell polarity regulator. In Phoma sp. (strain ATCC 20986 / MF5453), this protein is Polarized growth protein L1.